Here is an 860-residue protein sequence, read N- to C-terminus: Probable linoleate 9S-lipoxygenase 4 (860 aa).

The region spanning 29-159 is the PLAT domain; the sequence is NALDFTDLAG…RYKSDRIFFA (131 aa). The region spanning 162–860 is the Lipoxygenase domain; it reads PYLPSETPEL…GKGIPNSVSI (699 aa). The interval 209–246 is disordered; sequence PDQGKENVRTTLGGSADYPYPRRGRTGRPPTRTDPKSE. His-521, His-526, His-712, Asn-716, and Ile-860 together coordinate Fe cation.

Belongs to the lipoxygenase family. As to quaternary structure, monomer. Requires Fe cation as cofactor. In terms of tissue distribution, expressed in tubers and roots. Not detected in leaves, flowers, stems, shoot tips, or axillary buds.

The protein localises to the cytoplasm. It catalyses the reaction (9Z,12Z)-octadecadienoate + O2 = (9S)-hydroperoxy-(10E,12Z)-octadecadienoate. It participates in lipid metabolism; oxylipin biosynthesis. In terms of biological role, plant lipoxygenases may be involved in a number of diverse aspects of plant physiology including growth and development, pest resistance, and senescence or responses to wounding. Catalyzes the hydroperoxidation of lipids containing a cis,cis-1,4-pentadiene structure. The protein is Probable linoleate 9S-lipoxygenase 4 (LOX1.4) of Solanum tuberosum (Potato).